The primary structure comprises 81 residues: Cytochrome b559 subunit alpha (81 aa).

Residues Arg18 and His23 each coordinate heme. The helical transmembrane segment at 19–40 (YWVIHSITIPMLFIAGWLFVST) threads the bilayer.

The protein belongs to the PsbE/PsbF family. In terms of assembly, heterodimer of an alpha subunit and a beta subunit. PSII is composed of 1 copy each of membrane proteins PsbA, PsbB, PsbC, PsbD, PsbE, PsbF, PsbH, PsbI, PsbJ, PsbK, PsbL, PsbM, PsbT, PsbX, PsbY, PsbZ, Psb30/Ycf12, peripheral proteins PsbO, CyanoQ (PsbQ), PsbU, PsbV and a large number of cofactors. It forms dimeric complexes. Heme b is required as a cofactor.

The protein localises to the cellular thylakoid membrane. In terms of biological role, this b-type cytochrome is tightly associated with the reaction center of photosystem II (PSII). PSII is a light-driven water:plastoquinone oxidoreductase that uses light energy to abstract electrons from H(2)O, generating O(2) and a proton gradient subsequently used for ATP formation. It consists of a core antenna complex that captures photons, and an electron transfer chain that converts photonic excitation into a charge separation. The protein is Cytochrome b559 subunit alpha of Synechocystis sp. (strain ATCC 27184 / PCC 6803 / Kazusa).